We begin with the raw amino-acid sequence, 152 residues long: MDSKVVIYTDGACSGNPGPGGWGALLKFNDASKKIFGYELVTTNNRMEMTAALEALRVLKKSSIVEIYTDSKYLQHGITVWIHNWMKNNWCKNNNEPVKNVDLWQKLYSELSKHTIMWRWVKGHASNSGNIAADKLAVQGRETAMEILKCRG.

The RNase H type-1 domain maps to 1 to 142 (MDSKVVIYTD…ADKLAVQGRE (142 aa)). Residues D10, E48, D70, and D134 each coordinate Mg(2+).

The protein belongs to the RNase H family. In terms of assembly, monomer. It depends on Mg(2+) as a cofactor.

It localises to the cytoplasm. The catalysed reaction is Endonucleolytic cleavage to 5'-phosphomonoester.. Functionally, endonuclease that specifically degrades the RNA of RNA-DNA hybrids. The polypeptide is Ribonuclease H (Rickettsia typhi (strain ATCC VR-144 / Wilmington)).